The sequence spans 152 residues: UPF0266 membrane protein ESA_01432 (152 aa).

Transmembrane regions (helical) follow at residues 1-21, 45-65, and 67-87; these read MTLTDGVLVIFIIALLGWAIY, ADSLIFTGLVAILIWQNVASH, and ALLTTWLLGALGLLAIYLFWI.

It belongs to the UPF0266 family.

It is found in the cell inner membrane. This Cronobacter sakazakii (strain ATCC BAA-894) (Enterobacter sakazakii) protein is UPF0266 membrane protein ESA_01432.